Here is an 81-residue protein sequence, read N- to C-terminus: MDPTIAAGALIGGGLIMAGGAIGAGIGDGVAGNALISGVARQPEAQGRLFTPFFITVGLVEAAYFINLAFMALFVFATPVK.

The next 2 helical transmembrane spans lie at 5-25 (IAAGALIGGGLIMAGGAIGAG) and 57-77 (VGLVEAAYFINLAFMALFVFA).

The protein belongs to the ATPase C chain family. As to quaternary structure, F-type ATPases have 2 components, F(1) - the catalytic core - and F(0) - the membrane proton channel. F(1) has five subunits: alpha(3), beta(3), gamma(1), delta(1), epsilon(1). F(0) has three main subunits: a(1), b(2) and c(10-14). The alpha and beta chains form an alternating ring which encloses part of the gamma chain. F(1) is attached to F(0) by a central stalk formed by the gamma and epsilon chains, while a peripheral stalk is formed by the delta and b chains.

Its subcellular location is the cell membrane. Functionally, f(1)F(0) ATP synthase produces ATP from ADP in the presence of a proton or sodium gradient. F-type ATPases consist of two structural domains, F(1) containing the extramembraneous catalytic core and F(0) containing the membrane proton channel, linked together by a central stalk and a peripheral stalk. During catalysis, ATP synthesis in the catalytic domain of F(1) is coupled via a rotary mechanism of the central stalk subunits to proton translocation. Its function is as follows. Key component of the F(0) channel; it plays a direct role in translocation across the membrane. A homomeric c-ring of between 10-14 subunits forms the central stalk rotor element with the F(1) delta and epsilon subunits. The sequence is that of ATP synthase subunit c from Mycobacterium bovis (strain ATCC BAA-935 / AF2122/97).